Reading from the N-terminus, the 278-residue chain is Cytoplasmic envelopment protein 1 (278 aa).

Belongs to the herpesviridae cytoplasmic envelopment protein 1 family.

It is found in the virion. Its subcellular location is the virion tegument. The protein localises to the host cytoplasm. The protein resides in the host Golgi apparatus. Functionally, plays a critical role in cytoplasmic virus egress. Participates in the final step of tegumentation and envelope acquisition within the host cytoplasm. This is Cytoplasmic envelopment protein 1 (ORF42) from Homo sapiens (Human).